Reading from the N-terminus, the 91-residue chain is Small ribosomal subunit protein uS15 (91 aa).

It belongs to the universal ribosomal protein uS15 family. Part of the 30S ribosomal subunit. Forms a bridge to the 50S subunit in the 70S ribosome, contacting the 23S rRNA.

Functionally, one of the primary rRNA binding proteins, it binds directly to 16S rRNA where it helps nucleate assembly of the platform of the 30S subunit by binding and bridging several RNA helices of the 16S rRNA. Its function is as follows. Forms an intersubunit bridge (bridge B4) with the 23S rRNA of the 50S subunit in the ribosome. The polypeptide is Small ribosomal subunit protein uS15 (Rickettsia akari (strain Hartford)).